A 545-amino-acid polypeptide reads, in one-letter code: 2-succinyl-5-enolpyruvyl-6-hydroxy-3-cyclohexene-1-carboxylate synthase (545 aa).

It belongs to the TPP enzyme family. MenD subfamily. Homodimer. Mg(2+) is required as a cofactor. Mn(2+) serves as cofactor. Requires thiamine diphosphate as cofactor.

It carries out the reaction isochorismate + 2-oxoglutarate + H(+) = 5-enolpyruvoyl-6-hydroxy-2-succinyl-cyclohex-3-ene-1-carboxylate + CO2. It participates in quinol/quinone metabolism; 1,4-dihydroxy-2-naphthoate biosynthesis; 1,4-dihydroxy-2-naphthoate from chorismate: step 2/7. It functions in the pathway quinol/quinone metabolism; menaquinone biosynthesis. Catalyzes the thiamine diphosphate-dependent decarboxylation of 2-oxoglutarate and the subsequent addition of the resulting succinic semialdehyde-thiamine pyrophosphate anion to isochorismate to yield 2-succinyl-5-enolpyruvyl-6-hydroxy-3-cyclohexene-1-carboxylate (SEPHCHC). The chain is 2-succinyl-5-enolpyruvyl-6-hydroxy-3-cyclohexene-1-carboxylate synthase from Nocardia farcinica (strain IFM 10152).